The following is a 94-amino-acid chain: Large ribosomal subunit protein bL27 (94 aa).

A propeptide spanning residues 1 to 9 is cleaved from the precursor; sequence MLKLNLQFF.

Belongs to the bacterial ribosomal protein bL27 family. In terms of processing, the N-terminus is cleaved by ribosomal processing cysteine protease Prp.

This Staphylococcus aureus (strain Mu3 / ATCC 700698) protein is Large ribosomal subunit protein bL27.